A 473-amino-acid chain; its full sequence is Photosystem II CP43 reaction center protein (473 aa).

Residues Met1–Glu14 constitute a propeptide that is removed on maturation. N-acetylthreonine is present on Thr15. Thr15 is subject to Phosphothreonine. 5 helical membrane passes run Leu69–Ala93, Leu134–Asn155, Lys178–Thr200, Lys255–Ser275, and Trp291–Ala312. [CaMn4O5] cluster is bound at residue Glu367. A helical transmembrane segment spans residues Arg447–Pro471.

The protein belongs to the PsbB/PsbC family. PsbC subfamily. PSII is composed of 1 copy each of membrane proteins PsbA, PsbB, PsbC, PsbD, PsbE, PsbF, PsbH, PsbI, PsbJ, PsbK, PsbL, PsbM, PsbT, PsbX, PsbY, PsbZ, Psb30/Ycf12, at least 3 peripheral proteins of the oxygen-evolving complex and a large number of cofactors. It forms dimeric complexes. Binds multiple chlorophylls and provides some of the ligands for the Ca-4Mn-5O cluster of the oxygen-evolving complex. It may also provide a ligand for a Cl- that is required for oxygen evolution. PSII binds additional chlorophylls, carotenoids and specific lipids. is required as a cofactor.

It is found in the plastid. The protein localises to the chloroplast thylakoid membrane. Its function is as follows. One of the components of the core complex of photosystem II (PSII). It binds chlorophyll and helps catalyze the primary light-induced photochemical processes of PSII. PSII is a light-driven water:plastoquinone oxidoreductase, using light energy to abstract electrons from H(2)O, generating O(2) and a proton gradient subsequently used for ATP formation. This Ipomoea purpurea (Common morning glory) protein is Photosystem II CP43 reaction center protein.